Here is a 449-residue protein sequence, read N- to C-terminus: UNC93-like protein MFSD11 (449 aa).

Residues 8 to 28 (LFNIIILGVAFMFMFTAFQTC) traverse the membrane as a helical segment. An N-linked (GlcNAc...) asparagine glycan is attached at asparagine 40. Transmembrane regions (helical) follow at residues 53-73 (AIIYGVFSASNLITPSVVAIV), 74-94 (GPQLSMFASGLFYSMYIAVFI), 96-116 (PFPWSFYTASVFIGIAAAVLW), 138-158 (IFWALLQSSLFFGNLYIYFAW), and 170-190 (RTVFIALTVISLVGTVLFFLI). A Phosphoserine modification is found at serine 204. Transmembrane regions (helical) follow at residues 239–259 (MLLLSITTAYTGLELTFFSGV), 277–297 (LIGLSGIFIGIGEILGGSLFG), 309–329 (PVVLLGILVHFIAFYLIFLNM), 359–379 (FLLGLGDSCFNTQLLSILGFL), 385–405 (APAFAIFKFVQSICAAVAFFY), and 410–430 (LLHWQLLVMVIFGFFGTISFF).

The protein belongs to the unc-93 family.

The protein resides in the membrane. This Macaca fascicularis (Crab-eating macaque) protein is UNC93-like protein MFSD11 (MFSD11).